A 488-amino-acid chain; its full sequence is Patatin-like protein 7 (488 aa).

The tract at residues 23 to 49 (QRGGDGATAASKSANDYNNNDSLLTDM) is disordered. Over residues 32-47 (ASKSANDYNNNDSLLT) the composition is skewed to polar residues. In terms of domain architecture, PNPLA spans 101–301 (LSIDGGGMRG…AMSNPTAAAI (201 aa)). The GXGXXG motif lies at 105-110 (GGGMRG). The active-site Nucleophile is the Ser145.

It belongs to the patatin family. Highly expressed in roots and at lower levels in leaves, stems, flowers and siliques.

The protein localises to the cell membrane. Possesses non-specific lipolytic acyl hydrolase (LAH) activity. Catalyzes the hydrolysis of the galactolipids monogalactosyldiacylglycerol (MGDG) and digalactosyldiacylglycerol (DGDG), and the phoshpolipids phosphatidylcholine (PC), phosphatidylethanolamine (PE), phosphatidylglycerol (PG), phosphatidic acid (PA), phosphatidylserine (PS). Favors the release of fatty acid at the sn-2 position for PC. Possesses acyl-CoA thioesterase activity. Negatively affects disease resistance to the necrotic fungal pathogen Botrytis cinerea and the avirulent bacteria Pseudomonas syringae by promoting cell death and reducing the efficiency of the hypersensitive response, respectively. However, PLP2 contributes to resistance to cucumber mosaic virus (CMV), an obligate parasite inducing hypersensitive response. May negatively regulate oxylipin production, possibly via participating in membrane repair that includes removal of oxidatively modified lipids. Enzymatic products of PLP2 may influence cellulose content and cell elongation. This chain is Patatin-like protein 7 (PLP7), found in Arabidopsis thaliana (Mouse-ear cress).